A 321-amino-acid polypeptide reads, in one-letter code: Lipoyl synthase (321 aa).

Residues C68, C73, C79, C94, C98, C101, and S308 each coordinate [4Fe-4S] cluster. One can recognise a Radical SAM core domain in the interval 80–297 (FNHGTATFMI…KAEAIAMGFT (218 aa)).

The protein belongs to the radical SAM superfamily. Lipoyl synthase family. It depends on [4Fe-4S] cluster as a cofactor.

It is found in the cytoplasm. The catalysed reaction is [[Fe-S] cluster scaffold protein carrying a second [4Fe-4S](2+) cluster] + N(6)-octanoyl-L-lysyl-[protein] + 2 oxidized [2Fe-2S]-[ferredoxin] + 2 S-adenosyl-L-methionine + 4 H(+) = [[Fe-S] cluster scaffold protein] + N(6)-[(R)-dihydrolipoyl]-L-lysyl-[protein] + 4 Fe(3+) + 2 hydrogen sulfide + 2 5'-deoxyadenosine + 2 L-methionine + 2 reduced [2Fe-2S]-[ferredoxin]. The protein operates within protein modification; protein lipoylation via endogenous pathway; protein N(6)-(lipoyl)lysine from octanoyl-[acyl-carrier-protein]: step 2/2. Catalyzes the radical-mediated insertion of two sulfur atoms into the C-6 and C-8 positions of the octanoyl moiety bound to the lipoyl domains of lipoate-dependent enzymes, thereby converting the octanoylated domains into lipoylated derivatives. The polypeptide is Lipoyl synthase (Pectobacterium carotovorum subsp. carotovorum (strain PC1)).